The chain runs to 131 residues: Large ribosomal subunit protein bL12 (131 aa).

This sequence belongs to the bacterial ribosomal protein bL12 family. Homodimer. Part of the ribosomal stalk of the 50S ribosomal subunit. Forms a multimeric L10(L12)X complex, where L10 forms an elongated spine to which 2 to 4 L12 dimers bind in a sequential fashion. Binds GTP-bound translation factors.

Its function is as follows. Forms part of the ribosomal stalk which helps the ribosome interact with GTP-bound translation factors. Is thus essential for accurate translation. This chain is Large ribosomal subunit protein bL12, found in Prochlorococcus marinus (strain MIT 9312).